We begin with the raw amino-acid sequence, 303 residues long: Signal recognition particle receptor FtsY (303 aa).

GTP is bound by residues 108 to 115 (GVNGAGKT), 190 to 194 (DTAGR), and 254 to 257 (TKLD).

The protein belongs to the GTP-binding SRP family. FtsY subfamily. As to quaternary structure, part of the signal recognition particle protein translocation system, which is composed of SRP and FtsY. SRP is a ribonucleoprotein composed of Ffh and a 4.5S RNA molecule.

Its subcellular location is the cell inner membrane. It localises to the cytoplasm. The enzyme catalyses GTP + H2O = GDP + phosphate + H(+). In terms of biological role, involved in targeting and insertion of nascent membrane proteins into the cytoplasmic membrane. Acts as a receptor for the complex formed by the signal recognition particle (SRP) and the ribosome-nascent chain (RNC). Interaction with SRP-RNC leads to the transfer of the RNC complex to the Sec translocase for insertion into the membrane, the hydrolysis of GTP by both Ffh and FtsY, and the dissociation of the SRP-FtsY complex into the individual components. In Rickettsia felis (strain ATCC VR-1525 / URRWXCal2) (Rickettsia azadi), this protein is Signal recognition particle receptor FtsY.